The chain runs to 36 residues: Asteropin-A (36 aa).

Disulfide bonds link Cys-2-Cys-18, Cys-9-Cys-25, and Cys-17-Cys-35.

Its function is as follows. Sialidase inhibitor. Competitively inhibits bacterial sialidases, but not viral sialidases. Does not inhibit glycosidases or proteases. Has no antitumor activity. This Asteropus simplex (Marine sponge) protein is Asteropin-A.